A 174-amino-acid polypeptide reads, in one-letter code: Regulator of G-protein signaling 8 (174 aa).

An RGS domain is found at 46–162; it reads SFDILLSNKY…IRSKIYQDLL (117 aa).

It localises to the cell membrane. It is found in the membrane. The protein localises to the perikaryon. Its subcellular location is the cell projection. The protein resides in the dendrite. It localises to the nucleus. Regulates G protein-coupled receptor signaling cascades, including signaling via muscarinic acetylcholine receptors and dopamine receptors. Inhibits signal transduction by increasing the GTPase activity of G protein alpha subunits, thereby driving them into their inactive GDP-bound form. Modulates the activity of potassium channels that are activated in response to G protein-coupled receptor signaling. The chain is Regulator of G-protein signaling 8 (rgs8) from Danio rerio (Zebrafish).